Consider the following 236-residue polypeptide: MTKRYWNINLEEMMEAGVHFGHGTRKWNPRMAPYISAKRKGIHITNLTRTARFLSEACDLLFDAASGGKHFLIVGTKKKAADSVASAAIRARCHYVNKKWLGGMSTNWSTTETRLQNFRDLRAEQKAGKIDRLPKRDAAMLKRQLSTLQTYLGGIKYMTGLPDIVIIVDQQEDYTALRECVILGIPTICLIDTNSDPDLADISIPANDDAIASIRLILNKLVFAICEGRSSYIRNR.

Belongs to the universal ribosomal protein uS2 family.

The protein resides in the plastid. It localises to the chloroplast. This Acorus calamus var. americanus (American sweet flag) protein is Small ribosomal subunit protein uS2c (rps2).